The chain runs to 388 residues: MTIRNQRFSLLKQPIYSTLNQHLIDYPTPSNLSYWWGFGCLAGICLVIQIVTGVFLAMHYTPHVDLAFNSVEHIMRDVEGGWLLRYMHANGASMFLIVVHLHIFRGLYHASYSSPREFVWCLGVVIFLLMIVTAFIGYVPPWGQMSFWGATVITSLASAIPVVGDTIVTWLWGGFSVDNATLNRFFSLHHLLPLILAGASLLHLAALHQYGSNNPLGVHSEMDKIASYPYFYVKDLVGRVASAIFFSIWIFFAPNVLGHPDNYIPANPMPTPPHIVPEWYFLPIHAILRSIPDKAGGVAAIAPVFISLLALPFFKEMYVRSSSFRPIHQGIFWLLLADCLLLGWIGCQPVEAPFVTIGQISSFFFFLFFAITPIPGRVGRGIPKYYTE.

The next 4 helical transmembrane spans lie at 38–58 (FGCL…FLAM), 82–104 (WLLR…LHIF), 119–139 (VWCL…IGYV), and 185–205 (FFSL…LHLA). Positions 88 and 102 each coordinate heme b. Heme b-binding residues include His189 and His203. His208 is a binding site for a ubiquinone. Helical transmembrane passes span 231-251 (FYVK…IWIF), 295-315 (AGGV…PFFK), 327-347 (IHQG…WIGC), and 354-373 (FVTI…AITP).

Belongs to the cytochrome b family. The main subunits of complex b-c1 are: cytochrome b, cytochrome c1 and the Rieske protein. Heme b is required as a cofactor.

The protein resides in the mitochondrion inner membrane. Its function is as follows. Component of the ubiquinol-cytochrome c reductase complex (complex III or cytochrome b-c1 complex) that is part of the mitochondrial respiratory chain. The b-c1 complex mediates electron transfer from ubiquinol to cytochrome c. Contributes to the generation of a proton gradient across the mitochondrial membrane that is then used for ATP synthesis. In Zea mays (Maize), this protein is Cytochrome b (MT-CYB).